The following is a 119-amino-acid chain: Large ribosomal subunit protein uL18 (119 aa).

This sequence belongs to the universal ribosomal protein uL18 family. In terms of assembly, part of the 50S ribosomal subunit; part of the 5S rRNA/L5/L18/L25 subcomplex. Contacts the 5S and 23S rRNAs.

This is one of the proteins that bind and probably mediate the attachment of the 5S RNA into the large ribosomal subunit, where it forms part of the central protuberance. The protein is Large ribosomal subunit protein uL18 of Roseobacter denitrificans (strain ATCC 33942 / OCh 114) (Erythrobacter sp. (strain OCh 114)).